The sequence spans 345 residues: Polyprenyl transferase dpmpC (345 aa).

The next 8 membrane-spanning stretches (helical) occupy residues Pro-24–Ala-44, Gly-60–Val-80, Val-101–Leu-121, Leu-183–Trp-203, Cys-220–Tyr-240, His-261–Leu-281, Ser-286–Ile-306, and Leu-319–Leu-339.

It belongs to the UbiA prenyltransferase family. The cofactor is Mg(2+).

The protein resides in the membrane. Its pathway is secondary metabolite biosynthesis; terpenoid biosynthesis. Its function is as follows. Polyprenyl transferase; part of the gene cluster that mediates the biosynthesis of diterpenoid pyrones. The first step of the pathway is the synthesis of the alpha-pyrone moiety by the polyketide synthase dpmpA via condensation of one acetyl-CoA starter unit with 3 malonyl-CoA units and 2 methylations. The alpha-pyrone is then combined with geranylgeranyl pyrophosphate (GGPP) formed by the GGPP synthase dpmpD through the action of the prenyltransferase dpmpC to yield a linear alpha-pyrone diterpenoid. Subsequent steps in the diterpenoid pyrone biosynthetic pathway involve the decalin core formation, which is initiated by the epoxidation of the C10-C11 olefin by the FAD-dependent oxidoreductase dpmpE, and is followed by a cyclization cascade catalyzed by the terpene cyclase dpmpB. The short chain dehydrogenase/reductase dpmpG then oxidizes the 8S hydroxy group to a ketone and the short chain dehydrogenase/reductase dpmpH reduces the ketone to the 8R hydroxy group to yield higginsianin B. Higginsianin B is further methylated by the methyltransferase dpmpI to produce the intermediate named FDDP B. The cytochrome P450 monooxygenase dpmpJ then oxidizes the C-26 methyl to primary alcohol, producing the final diterpenoid pyrone with a C-26 primary alcohol on the gamma-pyrone moiety named FDDP C. In Macrophomina phaseolina (strain MS6) (Charcoal rot fungus), this protein is Polyprenyl transferase dpmpC.